Here is a 754-residue protein sequence, read N- to C-terminus: Carbon catabolite repressor protein 4 homolog 6 (754 aa).

Disordered stretches follow at residues 34 to 65 (PYRG…DQFV) and 85 to 176 (EPYR…KTPP). Residues 50 to 61 (FSDRPYNDDAGR) show a composition bias toward basic and acidic residues. Composition is skewed to polar residues over residues 96-106 (QRQQPPFNQNY) and 116-133 (GQWQ…NQNY). Residues 162–171 (KPSDYREWEY) show a composition bias toward basic and acidic residues. Glutamate 237 contributes to the Mg(2+) binding site. 2 disordered regions span residues 404 to 431 (VSAE…QGQV) and 494 to 558 (IENR…DQDI). 3 stretches are compositionally biased toward polar residues: residues 415–431 (NYTT…QGQV), 503–525 (GNLS…QHAS), and 534–545 (DRSVSSGLSETE).

Belongs to the CCR4/nocturin family. As to quaternary structure, component of the CCR4-NOT complex, at least composed of CRR4 and CAF1 proteins. It depends on Mg(2+) as a cofactor.

It localises to the nucleus. The protein localises to the cytoplasm. The enzyme catalyses Exonucleolytic cleavage of poly(A) to 5'-AMP.. Acts as a catalytic component of the CCR4-NOT core complex, which in the nucleus seems to be a general transcription factor, and in the cytoplasm the major mRNA deadenylase involved in mRNA turnover. This Arabidopsis thaliana (Mouse-ear cress) protein is Carbon catabolite repressor protein 4 homolog 6 (CCR4-6).